A 249-amino-acid polypeptide reads, in one-letter code: tRNA (guanine-N(1)-)-methyltransferase (249 aa).

S-adenosyl-L-methionine is bound by residues Gly113 and 133–138; that span reads VGDYVL.

It belongs to the RNA methyltransferase TrmD family. Homodimer.

Its subcellular location is the cytoplasm. It carries out the reaction guanosine(37) in tRNA + S-adenosyl-L-methionine = N(1)-methylguanosine(37) in tRNA + S-adenosyl-L-homocysteine + H(+). Its function is as follows. Specifically methylates guanosine-37 in various tRNAs. The polypeptide is tRNA (guanine-N(1)-)-methyltransferase (Tolumonas auensis (strain DSM 9187 / NBRC 110442 / TA 4)).